We begin with the raw amino-acid sequence, 445 residues long: Argininosuccinate synthase (445 aa).

ATP-binding positions include 17–25 (AFSGGLDTS) and Ala43. Residue Tyr99 participates in L-citrulline binding. 2 residues coordinate ATP: Gly129 and Thr131. The L-aspartate site is built by Thr131, Asn135, and Asp136. Asn135 lines the L-citrulline pocket. Asp136 serves as a coordination point for ATP. Positions 139 and 192 each coordinate L-citrulline. Asp194 is a binding site for ATP. L-citrulline contacts are provided by Thr201, Glu203, and Glu280.

It belongs to the argininosuccinate synthase family. Type 2 subfamily. As to quaternary structure, homotetramer.

It localises to the cytoplasm. It catalyses the reaction L-citrulline + L-aspartate + ATP = 2-(N(omega)-L-arginino)succinate + AMP + diphosphate + H(+). The protein operates within amino-acid biosynthesis; L-arginine biosynthesis; L-arginine from L-ornithine and carbamoyl phosphate: step 2/3. The chain is Argininosuccinate synthase from Bordetella bronchiseptica (strain ATCC BAA-588 / NCTC 13252 / RB50) (Alcaligenes bronchisepticus).